The sequence spans 118 residues: Large ribosomal subunit protein uL22 (118 aa).

Belongs to the universal ribosomal protein uL22 family. Part of the 50S ribosomal subunit.

Functionally, this protein binds specifically to 23S rRNA; its binding is stimulated by other ribosomal proteins, e.g. L4, L17, and L20. It is important during the early stages of 50S assembly. It makes multiple contacts with different domains of the 23S rRNA in the assembled 50S subunit and ribosome. In terms of biological role, the globular domain of the protein is located near the polypeptide exit tunnel on the outside of the subunit, while an extended beta-hairpin is found that lines the wall of the exit tunnel in the center of the 70S ribosome. The protein is Large ribosomal subunit protein uL22 of Synechococcus sp. (strain RCC307).